Reading from the N-terminus, the 125-residue chain is Diol dehydratase-reactivating factor small subunit (125 aa).

Glu-31 is a Mg(2+) binding site.

Belongs to the DdrB/PduH family. In terms of assembly, component of the DDR complex, a heterotetramer of DdrA(2)/DdrB(2). The DDR complex interacts with the diol dehydratase complex in the presence of ADP but not ATP. Requires Mg(2+) as cofactor.

It catalyses the reaction ATP + H2O = ADP + phosphate + H(+). Small subunit of the diol dehydratase-reactivating factor (DDR), which reactivates suicidally inhibited adenosylcobalamin-dependent diol dehydratase (DD, pddA, pddB, pddC). DDR acts as a chaperone, reactivates inactivated DD holoenzyme in the presence of ATP, Mg(2+) and free adenosylcobalamin (AdoCbl), by mediating the exchange of the tightly bound damaged cofactor AdoCbl for a free intact one. Reactivation takes place in two steps: ADP-dependent cobalamin release, and ATP-dependent dissociation of the DD apoenzyme-DDR complex. DDR has weak ATPase activity which is required for DD reactivation. Activates glycerol-inactivated, O2-inactivated holoenzyme and inactivated enzyme-cyanocobalamin complex. Also reactivates glycerol-inactivated hologlycerol dehydratase, a DD isozyme. The polypeptide is Diol dehydratase-reactivating factor small subunit (Klebsiella michiganensis (strain ATCC 8724 / DSM 4798 / JCM 20051 / NBRC 3318 / NRRL B-199 / KCTC 1686 / BUCSAV 143 / CCM 1901)).